We begin with the raw amino-acid sequence, 406 residues long: ESX-5 secretion system protein EccE5 (406 aa).

Helical transmembrane passes span leucine 9–valine 29 and valine 43–tyrosine 63.

The protein belongs to the EccE family. As to quaternary structure, part of the ESX-5 / type VII secretion system (T7SS), which is composed of cytosolic and membrane components. The ESX-5 membrane complex is composed of EccB5, EccC5, EccD5 and EccE5.

Its subcellular location is the cell inner membrane. Functionally, part of the ESX-5 specialized secretion system, which is responsible for the secretion of EsxN and a number of PE_PGRS and PPE proteins, including PPE41. This Mycobacterium tuberculosis (strain ATCC 25618 / H37Rv) protein is ESX-5 secretion system protein EccE5.